The sequence spans 122 residues: Phospholipase A2 nigroviriditoxin basic subunit B (122 aa).

7 disulfides stabilise this stretch: Cys26–Cys115, Cys28–Cys44, Cys43–Cys95, Cys49–Cys122, Cys50–Cys88, Cys57–Cys81, and Cys75–Cys86. Residues Tyr27, Gly29, and Gly31 each coordinate Ca(2+). Residue His47 is part of the active site. Asp48 serves as a coordination point for Ca(2+). The active site involves Asp89.

This sequence belongs to the phospholipase A2 family. Group II subfamily. D49 sub-subfamily. In terms of assembly, nigroviriditoxin is a heterodimer of an acidic subunit A and a basic subunit B. The cofactor is Ca(2+). Expressed by the venom gland.

It localises to the secreted. The catalysed reaction is a 1,2-diacyl-sn-glycero-3-phosphocholine + H2O = a 1-acyl-sn-glycero-3-phosphocholine + a fatty acid + H(+). Functionally, heterodimer A-B: Nigroviriditoxin possesses phospholipase A2 (PLA2) activity. It consists of a non-covalent association of a basic PLA2 subunit B with a non-enzymatic subunit A. Subunit B: Snake venom phospholipase A2 (PLA2) that induces myonecrosis in mice. PLA2 catalyzes the calcium-dependent hydrolysis of the 2-acyl groups in 3-sn-phosphoglycerides. The sequence is that of Phospholipase A2 nigroviriditoxin basic subunit B from Bothriechis nigroviridis (Black-speckled palm pit viper).